We begin with the raw amino-acid sequence, 783 residues long: E3 UFM1-protein ligase 1 homolog (783 aa).

The interval 404 to 482 is disordered; sequence SNSSANFDAD…AGSSRKSVKP (79 aa). The segment covering 445–457 has biased composition (basic residues); it reads KSTKKHQRGRAAA.

It belongs to the UFL1 family.

In terms of biological role, E3 UFM1-protein ligase that mediates ufmylation of target proteins. This is E3 UFM1-protein ligase 1 homolog from Drosophila mojavensis (Fruit fly).